Here is a 150-residue protein sequence, read N- to C-terminus: Large ribosomal subunit protein uL15 (150 aa).

This sequence belongs to the universal ribosomal protein uL15 family. Part of the 50S ribosomal subunit.

In terms of biological role, binds to the 23S rRNA. The protein is Large ribosomal subunit protein uL15 of Rickettsia typhi (strain ATCC VR-144 / Wilmington).